Here is a 118-residue protein sequence, read N- to C-terminus: Protein TusC (118 aa).

The protein belongs to the DsrF/TusC family. Heterohexamer, formed by a dimer of trimers. The hexameric TusBCD complex contains 2 copies each of TusB, TusC and TusD. The TusBCD complex interacts with TusE.

It localises to the cytoplasm. Functionally, part of a sulfur-relay system required for 2-thiolation of 5-methylaminomethyl-2-thiouridine (mnm(5)s(2)U) at tRNA wobble positions. The chain is Protein TusC from Salmonella agona (strain SL483).